We begin with the raw amino-acid sequence, 104 residues long: Large ribosomal subunit protein uL24 (104 aa).

It belongs to the universal ribosomal protein uL24 family. In terms of assembly, part of the 50S ribosomal subunit.

In terms of biological role, one of two assembly initiator proteins, it binds directly to the 5'-end of the 23S rRNA, where it nucleates assembly of the 50S subunit. One of the proteins that surrounds the polypeptide exit tunnel on the outside of the subunit. The polypeptide is Large ribosomal subunit protein uL24 (Rhodopseudomonas palustris (strain BisB5)).